Consider the following 451-residue polypeptide: Mannan endo-1,6-alpha-mannosidase DCW1 (451 aa).

A signal peptide spans 1-21 (MLAVTFTAAAVLSLLAASGRT). 6 N-linked (GlcNAc...) asparagine glycosylation sites follow: N84, N109, N203, N242, N267, and N291. The tract at residues 397-419 (AMNGGTSPGDPAAGTKTKAENLP) is disordered. D427 is lipidated: GPI-anchor amidated aspartate. The propeptide at 428-451 (RAGAGIITALIGSSFLACTLWLII) is removed in mature form.

Belongs to the glycosyl hydrolase 76 family.

It is found in the secreted. It localises to the cell wall. The protein resides in the cell membrane. It catalyses the reaction Random hydrolysis of (1-&gt;6)-alpha-D-mannosidic linkages in unbranched (1-&gt;6)-mannans.. Its function is as follows. Required for normal synthesis of the cell wall. The polypeptide is Mannan endo-1,6-alpha-mannosidase DCW1 (DCW1) (Eremothecium gossypii (strain ATCC 10895 / CBS 109.51 / FGSC 9923 / NRRL Y-1056) (Yeast)).